Consider the following 86-residue polypeptide: MTLYKIVSKPIILLAFFFTRVVFTNEVDGEELFYKPTCHSDTYEIILKKFSSIWILVNTFILLCSFSLFLKYWCFKTLAKETVKGY.

Positions 1–29 (MTLYKIVSKPIILLAFFFTRVVFTNEVDG) are cleaved as a signal peptide. The Virion surface segment spans residues 30 to 47 (EELFYKPTCHSDTYEIIL). Residues 48–68 (KKFSSIWILVNTFILLCSFSL) form a helical membrane-spanning segment. Over 69–86 (FLKYWCFKTLAKETVKGY) the chain is Intravirion.

It belongs to the herpesviridae glycoprotein N family. In terms of assembly, interacts (via N-terminus) with gM (via N-terminus). The gM-gN heterodimer forms the gCII complex.

The protein resides in the virion membrane. It localises to the host membrane. The protein localises to the host Golgi apparatus. It is found in the host trans-Golgi network. Functionally, envelope glycoprotein necessary for proper maturation of gM and modulation of its membrane fusion activity. Also plays a critical role in virion morphogenesis. The polypeptide is Envelope glycoprotein N (Homo sapiens (Human)).